Reading from the N-terminus, the 568-residue chain is PWWP domain-containing protein2 (568 aa).

Basic and acidic residues predominate over residues 1–19 (MTEIKDSSVKDENPGKQEE). 3 disordered regions span residues 1–126 (MTEI…YKPG), 213–340 (QSTP…DVAK), and 465–568 (IASL…TGQK). Polar residues predominate over residues 29-46 (MSTATNNSKNIETTSSNG). 2 stretches are compositionally biased toward basic and acidic residues: residues 48–88 (EDIK…KTIE) and 100–122 (KSQKSEKSNGNARKETKQSERVN). The 65-residue stretch at 125–189 (PGMRVLTKMS…SDSLTPLTSE (65 aa)) folds into the PWWP domain. The span at 214–228 (STPDLDSLSVPSSES) shows a compositional bias: low complexity. The span at 229 to 249 (EVSEEESDQEMSEPSPIEEDY) shows a compositional bias: acidic residues. The span at 255–266 (RRITRKGTKKKT) shows a compositional bias: basic residues. The span at 281 to 292 (LNASSNVSSNPA) shows a compositional bias: polar residues. Positions 325–336 (KEEEEGSVANEE) are enriched in acidic residues. 2 stretches are compositionally biased toward basic and acidic residues: residues 489-500 (KQNEDNEDKVKA) and 514-541 (DASKDMISEEKSSKDADNSLEVAGKDFA).

This chain is PWWP domain-containing protein2 (pdp2), found in Schizosaccharomyces pombe (strain 972 / ATCC 24843) (Fission yeast).